A 460-amino-acid chain; its full sequence is Flavin-containing monooxygenase FMO GS-OX-like 9 (460 aa).

20 to 25 lines the FAD pocket; it reads GAGPAG. 222 to 227 is an NADP(+) binding site; it reads GNSMSG.

It belongs to the FMO family. FAD serves as cofactor.

Functionally, catalyzes the conversion of methylthioalkyl glucosinolates of any chain length into methylsulfinylalkyl glucosinolates. The sequence is that of Flavin-containing monooxygenase FMO GS-OX-like 9 from Arabidopsis thaliana (Mouse-ear cress).